The following is a 793-amino-acid chain: MLGMSHNRLQSQGTEHDKFATQKLFAIWGQIQSYLFQVELLKRCDPTVGVRMINRLKLNVLMIYYLEKKMVPALKEQREMNLTPLTYGLWLALRRAKLEGELLLDALCEFKDGGNLRDFFRKSMSMCGDCPYHSTVELDTYGGKVSTEIKFLHDVENVLKQLNYCHLILKADTVENFMVSLDNYLLKTLGSGSVVPPELYDPSQPCSVCFEELCVTANSGDSTHKRIVRKICDHITKQINIRVNSDDMVTHLPHATYVPDDKRTTAQTALDVIQSTMRDTTTENDSNISVSKAAAAALDAHNVFLPASGDLYAISELQFWIASSGRKLHQPRGNTVESFADNLEALVSKERLFDLRTSIVETAVFDRRMDHFERVFAQEIEHMNAADRLLLGGRAAAPDDIIEALIKACYDHHMSAPLLKRLLYPDEAAHDALKTVLERVSSHCIGNDIQCQDGDGTCGERMNETGHFRTNDSFAMSTTSLGHDEWLEMVKSASSDVARRRKMYAERLTKKSLASLDKCITEQRHELEKMLRVNVYGEVLIDSYTALFNGFRSRKRLLEAVKNCCANIIDNRNSDDAFDAHRFMQTSLLKHRIDPAMLPSLTHKFFQLVNGPMFSHDRHRFAQPSNTALYFSVENVGLLPHLKEEMARFMFHSSRKTDWTVSKFRGFYDFSTIDNVTAAHRMAWKYIKELIFATALFSSVFKCGELHICRADSLQINSNGDYVWKNGIYITYETEYPLIMILGSESSTSETQNMTAIIDTDVFSLLYSILQYMAPVTADQVRVEQITNSHAPI.

The C3H1-type zinc finger occupies 206–234 (CSVCFEELCVTANSGDSTHKRIVRKICDH). An ATP-binding site is contributed by 697–704 (FSSVFKCG).

It belongs to the herpesviridae TRM1 protein family. As to quaternary structure, associates with TRM2 and TRM3 to form the tripartite terminase complex. Interacts with portal protein.

The protein resides in the host nucleus. Its function is as follows. Component of the molecular motor that translocates viral genomic DNA in empty capsid during DNA packaging. Forms a tripartite terminase complex together with TRM2 and TRM3 in the host cytoplasm. Once the complex reaches the host nucleus, it interacts with the capsid portal vertex. This portal forms a ring in which genomic DNA is translocated into the capsid. TRM1 carries an endonuclease activity that plays an important role for the cleavage of concatemeric viral DNA into unit length genomes. This chain is Tripartite terminase subunit 1, found in Gallid herpesvirus 2 (strain Chicken/Md5/ATCC VR-987) (GaHV-2).